Here is a 114-residue protein sequence, read N- to C-terminus: Putative toxin HigB3 (114 aa).

Belongs to the mycobacterial HigB family.

Its function is as follows. Putative toxic component of a type II toxin-antitoxin (TA) system. Its cognate antitoxin would be HigA3. Not toxic upon expression in M.smegmatis. This is Putative toxin HigB3 from Mycobacterium tuberculosis (strain ATCC 25618 / H37Rv).